A 111-amino-acid chain; its full sequence is Cell cycle protein GpsB (111 aa).

Positions Ile-38–Val-72 form a coiled coil.

Belongs to the GpsB family. As to quaternary structure, forms polymers through the coiled coil domains. Interacts with PBP1, MreC and EzrA.

Its subcellular location is the cytoplasm. Its function is as follows. Divisome component that associates with the complex late in its assembly, after the Z-ring is formed, and is dependent on DivIC and PBP2B for its recruitment to the divisome. Together with EzrA, is a key component of the system that regulates PBP1 localization during cell cycle progression. Its main role could be the removal of PBP1 from the cell pole after pole maturation is completed. Also contributes to the recruitment of PBP1 to the division complex. Not essential for septum formation. The chain is Cell cycle protein GpsB from Bacillus cereus (strain ATCC 10987 / NRS 248).